Reading from the N-terminus, the 210-residue chain is Glutathione S-transferase 4 (210 aa).

The GST N-terminal domain occupies Met1 to Asp80. Residues Ser9, His50–Ile52, and Glu64–Arg66 contribute to the glutathione site. The 122-residue stretch at Cys87–Ile208 folds into the GST C-terminal domain.

Belongs to the GST superfamily. Theta family. Homodimer.

The catalysed reaction is RX + glutathione = an S-substituted glutathione + a halide anion + H(+). In terms of biological role, conjugation of reduced glutathione to a wide number of exogenous and endogenous hydrophobic electrophiles. This is Glutathione S-transferase 4 (Gst4) from Musca domestica (House fly).